We begin with the raw amino-acid sequence, 348 residues long: D-alanine--D-alanine ligase (348 aa).

Residues 132–334 form the ATP-grasp domain; the sequence is KRVLESAGIP…YAELIEELVR (203 aa). 162–217 lines the ATP pocket; that stretch reads EAVLSYPVFVKPANMGSSVGISKAESEEELRAAILLALTYDSRILIEQGVLAREIE. 3 residues coordinate Mg(2+): D288, E301, and N303.

This sequence belongs to the D-alanine--D-alanine ligase family. It depends on Mg(2+) as a cofactor. The cofactor is Mn(2+).

The protein resides in the cytoplasm. The enzyme catalyses 2 D-alanine + ATP = D-alanyl-D-alanine + ADP + phosphate + H(+). It functions in the pathway cell wall biogenesis; peptidoglycan biosynthesis. In terms of biological role, cell wall formation. The chain is D-alanine--D-alanine ligase from Streptococcus equi subsp. equi (strain 4047).